Reading from the N-terminus, the 731-residue chain is Zinc finger protein 615 (731 aa).

The 72-residue stretch at 8–79 folds into the KRAB domain; sequence LTLEDVAVDF…EDEIYSRICS (72 aa). 19 C2H2-type zinc fingers span residues 204–226, 232–254, 260–282, 288–310, 316–338, 344–366, 372–394, 400–422, 428–450, 456–478, 484–506, 512–534, 540–562, 568–590, 596–618, 624–646, 652–674, 680–702, and 708–730; these read HVCS…QRVH, HVCS…QRTH, YECT…QKTH, YTCS…QRTH, HGCS…QKTH, YICS…HRTH, FICN…QQTH, YKCN…QRTH, YVCT…QRTH, YICN…QRTH, YVCG…QRTH, YICN…RRTH, YVCS…QRTH, YICN…QQTH, YKCN…QRFH, FACT…QRIH, YKCS…QRKH, and YGCS…RRIH.

This sequence belongs to the krueppel C2H2-type zinc-finger protein family.

Its subcellular location is the nucleus. Its function is as follows. May be involved in transcriptional regulation. This chain is Zinc finger protein 615 (ZNF615), found in Homo sapiens (Human).